Consider the following 382-residue polypeptide: uncharacterized protein (382 aa).

Transmembrane regions (helical) follow at residues 8-28 (VMLL…LNTL), 45-65 (MVSS…GYLI), 75-95 (YLAS…VGFW), 102-122 (FIAG…LMCS), 131-151 (LLAA…LLVS), 157-177 (LLHV…PLLF), 204-224 (LGVN…GLMP), 231-251 (GMAN…GILG), 270-290 (VQVF…AMAP), 291-311 (ALFI…AWAC), 325-345 (ALLL…AMLM), and 349-369 (SDNL…LMLL).

It belongs to the major facilitator superfamily. YcaD (TC 2.A.1.26) family.

Its subcellular location is the cell inner membrane. This is an uncharacterized protein from Salmonella agona (strain SL483).